The following is a 92-amino-acid chain: MRCVTSFVVFCILMFFVLNIFTVEVKAQRLVPLCKTIGYENPGKCPADGNKFCRRKLDDRYVKYKRCDCQDTKGRKQNHHRCICYMKLPCNQ.

Positions 1 to 27 are cleaved as a signal peptide; it reads MRCVTSFVVFCILMFFVLNIFTVEVKA. 4 cysteine pairs are disulfide-bonded: Cys-34/Cys-90, Cys-45/Cys-69, Cys-53/Cys-82, and Cys-67/Cys-84.

The protein belongs to the DEFL family.

It is found in the secreted. In Arabidopsis thaliana (Mouse-ear cress), this protein is Putative defensin-like protein 251 (SCRL12).